We begin with the raw amino-acid sequence, 369 residues long: Sulfate permease 2, chloroplastic (369 aa).

Positions Met-1–Ser-21 are disordered. Residues Met-1–Ser-82 constitute a chloroplast transit peptide. Transmembrane regions (helical) follow at residues Val-110 to Val-130, Thr-156 to Ile-176, Val-187 to Met-207, Val-229 to Val-249, and Thr-335 to Ile-355. Residues Leu-153–Lys-356 enclose the ABC transmembrane type-1 domain.

This sequence belongs to the ATP-binding cassette (ABC) (TC 3.A.1) superfamily. Part of the chloroplast sulfate permease holocomplex. May form a heterodimer with SLUP1.

The protein localises to the plastid. Its subcellular location is the chloroplast membrane. In terms of biological role, part of the ABC-type chloroplast envelope-localized sulfate transporter. In Chlamydomonas reinhardtii (Chlamydomonas smithii), this protein is Sulfate permease 2, chloroplastic (SULP2).